A 276-amino-acid polypeptide reads, in one-letter code: Bifunctional protein FolD 1 (276 aa).

NADP(+) contacts are provided by residues 161–163 (GRG), Ser186, and Thr227.

The protein belongs to the tetrahydrofolate dehydrogenase/cyclohydrolase family. In terms of assembly, homodimer.

The enzyme catalyses (6R)-5,10-methylene-5,6,7,8-tetrahydrofolate + NADP(+) = (6R)-5,10-methenyltetrahydrofolate + NADPH. It catalyses the reaction (6R)-5,10-methenyltetrahydrofolate + H2O = (6R)-10-formyltetrahydrofolate + H(+). Its pathway is one-carbon metabolism; tetrahydrofolate interconversion. Its function is as follows. Catalyzes the oxidation of 5,10-methylenetetrahydrofolate to 5,10-methenyltetrahydrofolate and then the hydrolysis of 5,10-methenyltetrahydrofolate to 10-formyltetrahydrofolate. The sequence is that of Bifunctional protein FolD 1 from Frankia casuarinae (strain DSM 45818 / CECT 9043 / HFP020203 / CcI3).